The primary structure comprises 441 residues: ATP-dependent RNA helicase sub2 (441 aa).

Residues 23–32 (TTAAPAANGD) show a composition bias toward low complexity. The disordered stretch occupies residues 23-42 (TTAAPAANGDAAKKGDLTVS). A Q motif motif is present at residues 58–86 (TGFRDFLLKGELLRAITDCGFEHPSEVQQ). The region spanning 89–264 (IPTAILNVDV…KKFMRNPLEV (176 aa)) is the Helicase ATP-binding domain. 102–109 (AKSGLGKT) contacts ATP. Positions 211–214 (DECD) match the DECD box motif. In terms of domain architecture, Helicase C-terminal spans 292-437 (KLNELLDSLE…EYPEGGVDSS (146 aa)).

Belongs to the DEAD box helicase family. DECD subfamily.

It localises to the nucleus. The catalysed reaction is ATP + H2O = ADP + phosphate + H(+). ATP-binding RNA helicase involved in transcription elongation and required for the export of mRNA out of the nucleus. SUB2 also plays a role in pre-mRNA splicing and spliceosome assembly. May be involved in rDNA and telomeric silencing, and maintenance of genome integrity. The chain is ATP-dependent RNA helicase sub2 (sub2) from Aspergillus oryzae (strain ATCC 42149 / RIB 40) (Yellow koji mold).